The primary structure comprises 415 residues: Polyadenylate-binding protein RBP45C (415 aa).

The interval 1–77 is disordered; it reads MMQQPPPASN…GGSQNPGSAG (77 aa). The span at 23–64 shows a compositional bias: low complexity; sequence QQAYLQQQQSWMMQHQQQQQGQPPAGWNQQSAPSSGQPQQQQ. RRM domains follow at residues 80-160, 173-252, and 278-350; these read RSLW…WAQL, HTVF…PAAN, and TTIF…WGRS. Residues 344-356 are compositionally biased toward polar residues; that stretch reads RLSWGRSPSNKQT. The interval 344 to 369 is disordered; that stretch reads RLSWGRSPSNKQTQPDQAQYGGGGGY.

This sequence belongs to the polyadenylate-binding RBP45 family. As to quaternary structure, interacts with the poly(A) tail of mRNA in nucleus. In terms of tissue distribution, mostly expressed in seedlings and stems, and, to a lower extent, in leaves and flowers.

It is found in the nucleus. Functionally, heterogeneous nuclear ribonucleoprotein (hnRNP)-protein binding the poly(A) tail of mRNA and probably involved in some steps of pre-mRNA maturation. The protein is Polyadenylate-binding protein RBP45C (RBP45C) of Arabidopsis thaliana (Mouse-ear cress).